The primary structure comprises 852 residues: Serine/threonine-protein kinase pakB (852 aa).

The tract at residues 1–334 (MEQSKRVSMM…NVGNKQDEEK (334 aa)) is disordered. Position 8 is a phosphoserine; by autocatalysis (S8). Pro residues predominate over residues 24–35 (SPPPNRKPPPPN). Low complexity predominate over residues 44–56 (SSLNSSGSSFVSP). Over residues 57 to 74 (SPSPSPSPQQPVKRPLPS) the composition is skewed to pro residues. Composition is skewed to low complexity over residues 90-117 (RPQQ…NSNG) and 124-163 (FSSS…GSSN). Residues 181 to 191 (TPPPPPQPTPS) show a composition bias toward pro residues. The span at 201 to 210 (ASHNNTQHNI) shows a compositional bias: polar residues. Composition is skewed to low complexity over residues 246–270 (SPGS…STPI) and 293–317 (SNSN…ATTS). Positions 356–369 (VGSPFNVKHNIHVN) constitute a CRIB domain. Residues 419-433 (AQQEQQALMQKQMQQ) are compositionally biased toward low complexity. The tract at residues 419 to 526 (AQQEQQALMQ…GILSQQQEQQ (108 aa)) is disordered. Residues 470 to 485 (PQHHHQQQPPQQHHHQ) are compositionally biased toward basic residues. The span at 486-514 (QQQQQHNNNNNNNNNNNNNNNNQQSAQQQ) shows a compositional bias: low complexity. Positions 570-823 (GEGSTKIGEG…AKVLLNHPFL (254 aa)) constitute a Protein kinase domain. Residues 576–584 (IGEGAAGEV) and K599 contribute to the ATP site. D691 functions as the Proton acceptor in the catalytic mechanism.

It belongs to the protein kinase superfamily. STE Ser/Thr protein kinase family. STE20 subfamily. Interacts with rac1A, rac1B, rac1C, racA, racB, racC and racF1. Mg(2+) is required as a cofactor. In terms of processing, autophosphorylated at Ser-8. This may stimulate interaction with GTP-bound Rac family members which then further stimulates autophosphorylation and kinase activity.

It is found in the membrane. It localises to the cytoplasm. The protein resides in the cytoskeleton. It catalyses the reaction L-seryl-[protein] + ATP = O-phospho-L-seryl-[protein] + ADP + H(+). The enzyme catalyses L-threonyl-[protein] + ATP = O-phospho-L-threonyl-[protein] + ADP + H(+). In terms of biological role, regulator of the myosin I component of the cytoskeleton: required for regulation of cytokinesis, phagocytosis and pinocytosis. This chain is Serine/threonine-protein kinase pakB, found in Dictyostelium discoideum (Social amoeba).